Reading from the N-terminus, the 706-residue chain is Methionine--tRNA ligase (706 aa).

The 'HIGH' region signature appears at 13-23 (PYANGNFHIGH). Residues Cys144, Cys147, Cys157, and Cys160 each coordinate Zn(2+). A 'KMSKS' region motif is present at residues 341–345 (KMSKS). Lys344 serves as a coordination point for ATP. One can recognise a tRNA-binding domain in the interval 600–706 (DFAKIDLRIA…PGATPGMRVR (107 aa)).

This sequence belongs to the class-I aminoacyl-tRNA synthetase family. MetG type 1 subfamily. As to quaternary structure, homodimer. Zn(2+) serves as cofactor.

It localises to the cytoplasm. It catalyses the reaction tRNA(Met) + L-methionine + ATP = L-methionyl-tRNA(Met) + AMP + diphosphate. Its function is as follows. Is required not only for elongation of protein synthesis but also for the initiation of all mRNA translation through initiator tRNA(fMet) aminoacylation. The chain is Methionine--tRNA ligase from Paracidovorax citrulli (strain AAC00-1) (Acidovorax citrulli).